A 633-amino-acid chain; its full sequence is Probable potassium transport system protein Kup 2 (633 aa).

12 helical membrane-spanning segments follow: residues 18 to 38 (FLAM…TSPL), 61 to 81 (LISL…VLFL), 109 to 129 (LMFM…MITP), 145 to 165 (PAFH…LFAV), 173 to 193 (VSIF…AAGV), 211 to 231 (AVTF…AVFL), 255 to 275 (WFAV…ALVL), 287 to 307 (LMFP…ATII), 345 to 365 (IYLP…MFMF), 371 to 391 (LATA…VLAF), 405 to 425 (ATAV…ANLF), and 427 to 447 (IHDG…TMWT).

The protein belongs to the HAK/KUP transporter (TC 2.A.72) family.

It is found in the cell inner membrane. It catalyses the reaction K(+)(in) + H(+)(in) = K(+)(out) + H(+)(out). Its function is as follows. Transport of potassium into the cell. Likely operates as a K(+):H(+) symporter. The sequence is that of Probable potassium transport system protein Kup 2 from Sinorhizobium medicae (strain WSM419) (Ensifer medicae).